The primary structure comprises 152 residues: Xanthine-guanine phosphoribosyltransferase (152 aa).

5-phospho-alpha-D-ribose 1-diphosphate-binding positions include 37–38 (RG), arginine 69, and 88–96 (DDLVDSGDT). Arginine 69 is a GMP binding site. Aspartate 89 is a binding site for Mg(2+). Positions 92 and 135 each coordinate guanine. Xanthine-binding residues include aspartate 92 and isoleucine 135. GMP contacts are provided by residues 92 to 96 (DSGDT) and 134 to 135 (WI).

The protein belongs to the purine/pyrimidine phosphoribosyltransferase family. XGPT subfamily. In terms of assembly, homotetramer. It depends on Mg(2+) as a cofactor.

The protein localises to the cell inner membrane. It catalyses the reaction GMP + diphosphate = guanine + 5-phospho-alpha-D-ribose 1-diphosphate. The enzyme catalyses XMP + diphosphate = xanthine + 5-phospho-alpha-D-ribose 1-diphosphate. The catalysed reaction is IMP + diphosphate = hypoxanthine + 5-phospho-alpha-D-ribose 1-diphosphate. Its pathway is purine metabolism; GMP biosynthesis via salvage pathway; GMP from guanine: step 1/1. It functions in the pathway purine metabolism; XMP biosynthesis via salvage pathway; XMP from xanthine: step 1/1. Functionally, purine salvage pathway enzyme that catalyzes the transfer of the ribosyl-5-phosphate group from 5-phospho-alpha-D-ribose 1-diphosphate (PRPP) to the N9 position of the 6-oxopurines guanine and xanthine to form the corresponding ribonucleotides GMP (guanosine 5'-monophosphate) and XMP (xanthosine 5'-monophosphate), with the release of PPi. To a lesser extent, also acts on hypoxanthine. This Aliivibrio fischeri (strain ATCC 700601 / ES114) (Vibrio fischeri) protein is Xanthine-guanine phosphoribosyltransferase.